The chain runs to 423 residues: Mannose-6-phosphate isomerase (423 aa).

Ala2 is subject to N-acetylalanine. Phosphoserine is present on residues Ser102 and Ser108. Zn(2+) contacts are provided by Gln110, His112, Glu137, and His276. The active site involves Arg295.

This sequence belongs to the mannose-6-phosphate isomerase type 1 family. It depends on Zn(2+) as a cofactor. As to expression, expressed in all tissues, but more abundant in testis.

It localises to the cytoplasm. The enzyme catalyses D-mannose 6-phosphate = D-fructose 6-phosphate. Its pathway is nucleotide-sugar biosynthesis; GDP-alpha-D-mannose biosynthesis; alpha-D-mannose 1-phosphate from D-fructose 6-phosphate: step 1/2. Functionally, isomerase that catalyzes the interconversion of fructose-6-P and mannose-6-P and has a critical role in the supply of D-mannose derivatives required for many eukaryotic glycosylation reactions. In Mus musculus (Mouse), this protein is Mannose-6-phosphate isomerase.